The chain runs to 568 residues: Phosphoprotein (568 aa).

Residues 1–24 (MDQDAFFFERDPEAEGEAPRKQES) form a disordered region. The span at 7–24 (FFERDPEAEGEAPRKQES) shows a compositional bias: basic and acidic residues. The segment at 33 to 41 (DVVLSYKPT) is N0 binding. The segment at 45–324 (EDRSWLHGII…ANEEETSNTS (280 aa)) is disordered. Composition is skewed to basic and acidic residues over residues 56-105 (NPKE…HARI), 132-144 (RNTR…PNER), and 151-167 (LTDE…KREE). Over residues 190 to 208 (RTNNNGRSMETSSTHSTRI) the composition is skewed to polar residues. Basic and acidic residues predominate over residues 239–253 (TRSERTQNSELHKST). The segment covering 294–305 (YTMNNANNNTKS) has biased composition (polar residues). The segment at 344–411 (FELSRSASHV…SSRDLHKRFS (68 aa)) is multimerization. Positions 387–416 (EENRTLLKQIQEEINSSRDLHKRFSEYQKE) form a coiled coil. A l protein binding region spans residues 412-445 (EYQKEQNSLMMANLSTLHIITDRGGKTGDPSDTT). The tract at residues 434-455 (RGGKTGDPSDTTRSPSVFTKGK) is disordered. The segment covering 441 to 450 (PSDTTRSPSV) has biased composition (polar residues). Residues 479–568 (DLIREDELRD…FEEDIDSLTN (90 aa)) are interaction with the nucleocapsid (N-RNA).

It belongs to the respirovirus P protein family. Homotetramer. Interacts (via multimerization domain) with polymerase L; this interaction forms the polymerase complex. Interacts (via N-terminus) with N0; this interaction allows P to chaperon N0 before encapsidation and form the N-P complex. Interacts (via C-terminus) with N-RNA template; this interaction positions the polymerase on the template.

Its function is as follows. Essential cofactor of the RNA polymerase L that plays a central role in the transcription and replication by forming the polymerase complex with RNA polymerase L and recruiting L to the genomic N-RNA template for RNA synthesis. Also plays a central role in the encapsidation of nascent RNA chains by forming the encapsidation complex with the nucleocapsid protein N (N-P complex). Acts as a chaperone for newly synthesized free N protein, so-called N0, allowing encapsidation of nascent RNA chains during replication. The nucleoprotein protein N prevents excessive phosphorylation of P, which leads to down-regulation of viral transcription/ replication. Participates, together with N, in the formation of viral factories (viroplasms), which are large inclusions in the host cytoplasm where replication takes place. Recruits host PI4KB and remodel the host endoplasmic reticulum membrane to form viral replication factories. This chain is Phosphoprotein (P/C), found in Human parainfluenza 1 virus (strain C35) (HPIV-1).